The following is a 145-amino-acid chain: Small ribosomal subunit protein eS19 (145 aa).

It belongs to the eukaryotic ribosomal protein eS19 family. In terms of assembly, component of the small ribosomal subunit.

It is found in the cytoplasm. The protein resides in the nucleus. Its function is as follows. Component of the small ribosomal subunit. The ribosome is a large ribonucleoprotein complex responsible for the synthesis of proteins in the cell. Required for pre-rRNA processing and maturation of 40S ribosomal subunits. The chain is Small ribosomal subunit protein eS19 (rps19) from Myxine glutinosa (Atlantic hagfish).